A 93-amino-acid chain; its full sequence is UPF0358 protein lwe1048 (93 aa).

Belongs to the UPF0358 family.

The chain is UPF0358 protein lwe1048 from Listeria welshimeri serovar 6b (strain ATCC 35897 / DSM 20650 / CCUG 15529 / CIP 8149 / NCTC 11857 / SLCC 5334 / V8).